A 121-amino-acid polypeptide reads, in one-letter code: MIIVTNTIKVEKGAAEHVIRQFTGANGDGHPTKDIAEVEGFLGFELWHSKPEDKDYEEVVVTSKWESEEAQRNWVKSDSFKKAHGRTKDTREQREDRKGIVGNAIARFEVVHVQNPVIVEK.

The 100-residue stretch at 2 to 101 folds into the ABM domain; the sequence is IIVTNTIKVE…EQREDRKGIV (100 aa). Asn-6 provides a ligand contact to Fe cation. The segment at 76–98 is disordered; the sequence is KSDSFKKAHGRTKDTREQREDRK. The span at 78-98 shows a compositional bias: basic and acidic residues; it reads DSFKKAHGRTKDTREQREDRK. His-84 provides a ligand contact to heme.

Belongs to the antibiotic biosynthesis monooxygenase family. Heme-degrading monooxygenase IsdG subfamily. In terms of assembly, homodimer.

It localises to the cytoplasm. It catalyses the reaction heme b + 3 reduced [NADPH--hemoprotein reductase] + 3 O2 = biliverdin IXalpha + CO + Fe(2+) + 3 oxidized [NADPH--hemoprotein reductase] + 3 H2O + H(+). In terms of biological role, allows bacterial pathogens to use the host heme as an iron source. Catalyzes the oxidative degradation of the heme macrocyclic porphyrin ring to the biliverdin in the presence of a suitable electron donor such as ascorbate or NADPH--cytochrome P450 reductase, with subsequent release of free iron. The sequence is that of Heme-degrading monooxygenase from Listeria innocua serovar 6a (strain ATCC BAA-680 / CLIP 11262).